Consider the following 1527-residue polypeptide: MADDGGPFPLSSSLLHASSSTTILESSSSSLLATSSPAIAATFSSFSGRPSSYLPPPPLPPPAPSTMVGWIGWVFSFVFQVIPSILYWAITFCTITLPTWLFTLFSMSLTFTMNFTTLLLIALAIVSTVSWFIRYRFLNMYSRLPPEPQRKEPQLDLFPDVQEGDSKPGLANYLDEFLSAIKVFGYLERPVFHELTRTMQTRKLIAGETLLLEEEKGFCLVVDGLVQIFVKSIRDGKSPADHELNLAGDDSTDEEGQNVDGRQGYQLLTEVKNGASMSSLFSILSLFTEDIQLRTSESLSSSVSSVGPNLARVPDSSPSSPRGLVHSPVPVREPSESGHNLPTNGEFLPTVPPLHLEESRGTPDHDHQPESRTRPGKKRRKSVHPDIVARAMVDTTIAIIPASAFRRLTRVYPRATAHIVQVILTRLQRVTFATAHSYLGLTNEVLGIEKQMTKFTTYDLPNDMRGAALDRLKDKFIKERDRLGHEEVTKGIALHNPSAGRRRRSSSFLRKEAALQARMATTPRRPTATGSQENMSFHDRDAAGVSPGDLLSTIQLSRFGPRYEHLAPKIYSPLAEKEQSPFRPPTMRGPASPFHRKESLDEDALFRESILDCIMKALGLTSSTRDILRKSSHNSGDASPKLLSYDSRRQKAVFSNNAFGFIDPYEGSVDGETESMMSMSVTSAGGTSPIVNLREELRNDIEIVYFPQGSVLVEQGERHPGLYYVIDGFLDVGMPACDKGDDLVGATRPAHGEEAFPTLKRTTTASSRTSSVAPGGSDSKRRRQSRKSLYLIKPGGIQGYVGSVASYRSYTDVLAKTDVYVGFLPRASLERIAERYPIALLTLAKRLTSLLPRLLLHIDFALEWVQVNAGQVIYHQGDESDAIYLVLNGRLRSVLEGTDGKMNVVGEYGQGESVGELEVMTESTRPATLHAIRDTELAKFPRSLFNSLAQEHPGITIQVSKLIAQRMRDLVERPMTEKGAEHGAGSIKTATSTVNLRTVSILPVTAGVPVVEFGHRLLNALHQIGVTNGVTSLNQAAILNHLGRHAFTKMGKLKLSQYLADLEEKYGMVLYIADTNVNSPWTQTCITQADCILLVGLAESTPSIGEYERFLLGMKTTSRKELVLLHADRYCPPGLTRRWLKNRVWINGGHHHIQMGFRLTAEPSHPQTKRFGTVLKERVQVIQAEIQKYTSRRIHQTALYSAQTPFKGDFHRLARRLCGRSVGLVLGGGGARGIAQVGVIKALEEAGIPIDIIGGTSIGAFNGALYARDADVVPMYGRAKKFAGRMGSMWRFALDLTYPTVSYTTGHEFNRGIFKTFGDSQIEDFWLEFYCNTTNISKSRPEYHSSGYVWRYVRASMTLAGLIPPICDEGSMLLDGGYIDNLTVPHMKGLGADVIFAVDVGSIDDNTPQGYGDSLSGFWATINRWNPFSSVPNPPTLSEIQARLAYVSSFENLEQAKTTPGCLYMRPPIDPYGTLDFGKFDEIYQVGYKYGKEYLEKLKNEGTLPLREETEEKKKLQRTLAPRRASI.

The Cytoplasmic segment spans residues 1-69; sequence MADDGGPFPL…PPPAPSTMVG (69 aa). The helical transmembrane segment at 70-90 threads the bilayer; the sequence is WIGWVFSFVFQVIPSILYWAI. Residues 91-112 are Lumenal-facing; that stretch reads TFCTITLPTWLFTLFSMSLTFT. The chain crosses the membrane as a helical span at residues 113-133; it reads MNFTTLLLIALAIVSTVSWFI. The Cytoplasmic portion of the chain corresponds to 134–1527; the sequence is RYRFLNMYSR…RTLAPRRASI (1394 aa). 4 disordered regions span residues 240–259, 299–387, 576–596, and 750–785; these read ADHE…GQNV, LSSS…HPDI, EKEQ…PFHR, and AHGE…RRQS. Residues 355-373 show a composition bias toward basic and acidic residues; sequence HLEESRGTPDHDHQPESRT. Residues 685–804 and 846–966 contribute to the a nucleoside 3',5'-cyclic phosphate site; these read GGTS…VGSV and RLTS…IAQR. Residues 761–771 are compositionally biased toward low complexity; that stretch reads RTTTASSRTSS. One can recognise a PNPLA domain in the interval 1224–1388; that stretch reads LVLGGGGARG…IDNLTVPHMK (165 aa). Residues 1228–1233 carry the GXGXXG motif; the sequence is GGGARG. The short motif at 1255–1259 is the GXSXG element; sequence GTSIG. S1257 acts as the Nucleophile in catalysis. D1375 acts as the Proton acceptor in catalysis. The DGA/G motif lies at 1375 to 1377; it reads DGG.

It belongs to the NTE family.

It localises to the endoplasmic reticulum membrane. The catalysed reaction is a 1-acyl-sn-glycero-3-phosphocholine + H2O = sn-glycerol 3-phosphocholine + a fatty acid + H(+). Its activity is regulated as follows. Inhibited by organophosphorus esters. In terms of biological role, intracellular phospholipase B that catalyzes the double deacylation of phosphatidylcholine (PC) to glycerophosphocholine (GroPCho). Plays an important role in membrane lipid homeostasis. Responsible for the rapid PC turnover in response to inositol, elevated temperatures, or when choline is present in the growth medium. The sequence is that of Lysophospholipase nte1 (nte1) from Aspergillus terreus (strain NIH 2624 / FGSC A1156).